The following is a 523-amino-acid chain: Carboxypeptidase Y (523 aa).

An N-terminal signal peptide occupies residues 1-20 (MILHTYIILSLLTIFPKAIG). The propeptide occupies 21–107 (LSLQMPMALE…QELPNYRLRV (87 aa)). 5 disulfides stabilise this stretch: Cys-162–Cys-401, Cys-296–Cys-310, Cys-320–Cys-343, Cys-327–Cys-336, and Cys-365–Cys-371. N-linked (GlcNAc...) asparagine glycosylation is present at Asn-193. Residue Ser-249 is part of the active site. Asn-271 carries N-linked (GlcNAc...) asparagine glycosylation. Residue Asp-441 is part of the active site. N-linked (GlcNAc...) asparagine glycans are attached at residues Asn-484 and Asn-487. His-498 is an active-site residue.

Belongs to the peptidase S10 family.

It localises to the vacuole. It catalyses the reaction Release of a C-terminal amino acid with broad specificity.. Its function is as follows. Involved in degradation of small peptides. This Komagataella phaffii (strain GS115 / ATCC 20864) (Yeast) protein is Carboxypeptidase Y (PRC1).